Here is a 382-residue protein sequence, read N- to C-terminus: Dual-specificity RNA methyltransferase RlmN (382 aa).

Glutamate 96 serves as the catalytic Proton acceptor. The region spanning 102 to 342 (QGKRGTLCVS…VRTTRGEDID (241 aa)) is the Radical SAM core domain. Cysteine 109 and cysteine 345 are oxidised to a cystine. [4Fe-4S] cluster-binding residues include cysteine 116, cysteine 120, and cysteine 123. Residues 170–171 (GE), serine 202, 224–226 (SLH), and asparagine 302 each bind S-adenosyl-L-methionine. Cysteine 345 functions as the S-methylcysteine intermediate in the catalytic mechanism.

Belongs to the radical SAM superfamily. RlmN family. Requires [4Fe-4S] cluster as cofactor.

The protein resides in the cytoplasm. The catalysed reaction is adenosine(2503) in 23S rRNA + 2 reduced [2Fe-2S]-[ferredoxin] + 2 S-adenosyl-L-methionine = 2-methyladenosine(2503) in 23S rRNA + 5'-deoxyadenosine + L-methionine + 2 oxidized [2Fe-2S]-[ferredoxin] + S-adenosyl-L-homocysteine. It carries out the reaction adenosine(37) in tRNA + 2 reduced [2Fe-2S]-[ferredoxin] + 2 S-adenosyl-L-methionine = 2-methyladenosine(37) in tRNA + 5'-deoxyadenosine + L-methionine + 2 oxidized [2Fe-2S]-[ferredoxin] + S-adenosyl-L-homocysteine. In terms of biological role, specifically methylates position 2 of adenine 2503 in 23S rRNA and position 2 of adenine 37 in tRNAs. m2A2503 modification seems to play a crucial role in the proofreading step occurring at the peptidyl transferase center and thus would serve to optimize ribosomal fidelity. This Pseudomonas fluorescens (strain Pf0-1) protein is Dual-specificity RNA methyltransferase RlmN.